Consider the following 272-residue polypeptide: NAD kinase (272 aa).

The Proton acceptor role is filled by D50. NAD(+) contacts are provided by residues 50–51, 126–127, R152, D154, 165–170, and A189; these read DG, NE, and TAYNKS.

This sequence belongs to the NAD kinase family. It depends on a divalent metal cation as a cofactor.

The protein resides in the cytoplasm. The enzyme catalyses NAD(+) + ATP = ADP + NADP(+) + H(+). Involved in the regulation of the intracellular balance of NAD and NADP, and is a key enzyme in the biosynthesis of NADP. Catalyzes specifically the phosphorylation on 2'-hydroxyl of the adenosine moiety of NAD to yield NADP. This Streptococcus pneumoniae serotype 19F (strain G54) protein is NAD kinase.